Reading from the N-terminus, the 440-residue chain is 23S rRNA (uracil(1939)-C(5))-methyltransferase RlmD (440 aa).

One can recognise a TRAM domain in the interval 10 to 68; the sequence is KSTQPQRIEFTVDSLDHHCVGIGRHQGKAIFIEGALPGELVKARILEDKKQYAHAALQQ. Residues Cys81, Cys87, Cys90, and Cys169 each coordinate [4Fe-4S] cluster. Residues Gln273, Phe302, Asn307, Glu323, Asp350, and Asp371 each coordinate S-adenosyl-L-methionine. The Nucleophile role is filled by Cys397.

Belongs to the class I-like SAM-binding methyltransferase superfamily. RNA M5U methyltransferase family. RlmD subfamily.

The enzyme catalyses uridine(1939) in 23S rRNA + S-adenosyl-L-methionine = 5-methyluridine(1939) in 23S rRNA + S-adenosyl-L-homocysteine + H(+). Catalyzes the formation of 5-methyl-uridine at position 1939 (m5U1939) in 23S rRNA. This chain is 23S rRNA (uracil(1939)-C(5))-methyltransferase RlmD, found in Aeromonas hydrophila subsp. hydrophila (strain ATCC 7966 / DSM 30187 / BCRC 13018 / CCUG 14551 / JCM 1027 / KCTC 2358 / NCIMB 9240 / NCTC 8049).